A 155-amino-acid polypeptide reads, in one-letter code: Ribosome maturation factor RimP (155 aa).

This sequence belongs to the RimP family.

The protein resides in the cytoplasm. Its function is as follows. Required for maturation of 30S ribosomal subunits. The sequence is that of Ribosome maturation factor RimP from Staphylococcus saprophyticus subsp. saprophyticus (strain ATCC 15305 / DSM 20229 / NCIMB 8711 / NCTC 7292 / S-41).